We begin with the raw amino-acid sequence, 405 residues long: Prostaglandin E2 receptor EP1 subtype (405 aa).

Topologically, residues 1–39 (MSPCGLNLSLADEAATCATPRLPNTSVVLPTGDNGTSPA) are extracellular. 3 N-linked (GlcNAc...) asparagine glycosylation sites follow: N7, N24, and N34. The helical transmembrane segment at 40 to 62 (LPIFSMTLGAVSNVLALALLAQV) threads the bilayer. Residues 63-80 (AGRMRRRRSAATFLLFVA) lie on the Cytoplasmic side of the membrane. A helical membrane pass occupies residues 81-99 (SLLAIDLAGHVIPGALVLR). The Extracellular segment spans residues 100 to 113 (LYTAGRAPAGGACH). C112 and C190 are joined by a disulfide. A helical transmembrane segment spans residues 114–135 (FLGGCMVFFGLCPLLLGCGMAV). The Cytoplasmic portion of the chain corresponds to 136–157 (ERCVGVTQPLIHAARVSVARAR). The chain crosses the membrane as a helical span at residues 158-179 (LALAVLAAMALAVALLPLVHVG). Topologically, residues 180 to 202 (RYELQYPGTWCFISLGPRGGWRQ) are extracellular. A helical membrane pass occupies residues 203-228 (ALLAGLFAGLGLAALLAALVCNTLSG). Residues 229–301 (LALLRARWRR…HAHDVEMVGQ (73 aa)) are Cytoplasmic-facing. The segment at 243–287 (RFRKTAGPDDRRRWGSRGPRLASASSASSITSATATLRSSRGGGS) is disordered. The span at 262-282 (RLASASSASSITSATATLRSS) shows a compositional bias: low complexity. Residues 302–323 (LVGIMVVSCICWSPLLVLVVLA) traverse the membrane as a helical segment. Residues 324 to 337 (IGGWNSNSLQRPLF) lie on the Extracellular side of the membrane. Residues 338–357 (LAVRLASWNQILDPWVYILL) form a helical membrane-spanning segment. At 358–405 (RQAMLRQLLRLLPLRVSAKGGPTELGLTKSAWEASSLRSSRHSGFSHL) the chain is on the cytoplasmic side.

This sequence belongs to the G-protein coupled receptor 1 family. In terms of processing, phosphorylated. As to expression, abundant in kidney and in a lesser amount in lung.

It is found in the cell membrane. In terms of biological role, receptor for prostaglandin E2 (PGE2). The activity of this receptor is mediated by G(q) proteins which activate a phosphatidylinositol-calcium second messenger system. May play a role as an important modulator of renal function. Implicated the smooth muscle contractile response to PGE2 in various tissues. This chain is Prostaglandin E2 receptor EP1 subtype (Ptger1), found in Mus musculus (Mouse).